We begin with the raw amino-acid sequence, 493 residues long: Geraniol 8-hydroxylase (493 aa).

Residues 1-6 (MDYLTI) lie on the Lumenal side of the membrane. The helical transmembrane segment at 7-23 (ILTLLFALTLYEAFSYL) threads the bilayer. Over 24 to 493 (SRRTKNLPPG…HPLRAVPSTL (470 aa)) the chain is Cytoplasmic. Residue cysteine 436 participates in heme binding.

This sequence belongs to the cytochrome P450 family. The cofactor is heme. In terms of tissue distribution, expressed in roots, stems, leaves and flower buds. Hardly detected in mature flowers and fruits. Expressed in the internal phloem-associated parenchyma.

It is found in the endoplasmic reticulum membrane. The enzyme catalyses (2E)-geraniol + reduced [NADPH--hemoprotein reductase] + O2 = (6E)-8-hydroxygeraniol + oxidized [NADPH--hemoprotein reductase] + H2O + H(+). Functionally, hydroxylase involved in the biosynthesis of hydroxygeraniol, a precursor of the terpenoid indole alkaloids such as vinblastine and vincristine. Also able to hydroxylate in vitro nerol and to catalyze 3'-hydroxylation of the flavanone naringenin to form eriodictyol. No activity with apigenin, kaempferol, p-coumaric acid and ferulic acid as substrates. This Catharanthus roseus (Madagascar periwinkle) protein is Geraniol 8-hydroxylase (CYP76B6).